The primary structure comprises 545 residues: Esterase-5C (545 aa).

The N-terminal stretch at methionine 1–alanine 19 is a signal peptide. The cysteines at positions 84 and 103 are disulfide-linked. An N-linked (GlcNAc...) asparagine glycan is attached at asparagine 113. The active-site Acyl-ester intermediate is serine 207. Cysteine 259 and cysteine 271 form a disulfide bridge. The N-linked (GlcNAc...) asparagine glycan is linked to asparagine 421. Histidine 467 functions as the Charge relay system in the catalytic mechanism. N-linked (GlcNAc...) asparagine glycosylation occurs at asparagine 507. The cysteines at positions 515 and 536 are disulfide-linked.

It belongs to the type-B carboxylesterase/lipase family.

It localises to the secreted. It catalyses the reaction a carboxylic ester + H2O = an alcohol + a carboxylate + H(+). This chain is Esterase-5C (Est-5C), found in Drosophila miranda (Fruit fly).